We begin with the raw amino-acid sequence, 263 residues long: Glucosamine-6-phosphate deaminase (263 aa).

The active-site Proton acceptor; for enolization step is aspartate 72. Aspartate 141 acts as the For ring-opening step in catalysis. Histidine 143 (proton acceptor; for ring-opening step) is an active-site residue. The active-site For ring-opening step is the glutamate 148.

This sequence belongs to the glucosamine/galactosamine-6-phosphate isomerase family. NagB subfamily.

The catalysed reaction is alpha-D-glucosamine 6-phosphate + H2O = beta-D-fructose 6-phosphate + NH4(+). The protein operates within amino-sugar metabolism; N-acetylneuraminate degradation; D-fructose 6-phosphate from N-acetylneuraminate: step 5/5. With respect to regulation, allosterically activated by N-acetylglucosamine 6-phosphate (GlcNAc6P). Its function is as follows. Catalyzes the reversible isomerization-deamination of glucosamine 6-phosphate (GlcN6P) to form fructose 6-phosphate (Fru6P) and ammonium ion. The polypeptide is Glucosamine-6-phosphate deaminase (Phocaeicola vulgatus (strain ATCC 8482 / DSM 1447 / JCM 5826 / CCUG 4940 / NBRC 14291 / NCTC 11154) (Bacteroides vulgatus)).